Consider the following 690-residue polypeptide: Glycine--tRNA ligase beta subunit (690 aa).

The protein belongs to the class-II aminoacyl-tRNA synthetase family. As to quaternary structure, tetramer of two alpha and two beta subunits.

Its subcellular location is the cytoplasm. The enzyme catalyses tRNA(Gly) + glycine + ATP = glycyl-tRNA(Gly) + AMP + diphosphate. The polypeptide is Glycine--tRNA ligase beta subunit (Syntrophus aciditrophicus (strain SB)).